A 513-amino-acid chain; its full sequence is Serine/threonine-protein kinase ppk8 (513 aa).

The span at leucine 98–serine 114 shows a compositional bias: low complexity. Residues leucine 98–asparagine 120 are disordered. A Protein kinase domain is found at glycine 241–methionine 505. ATP-binding positions include isoleucine 247–isoleucine 255 and lysine 270. Catalysis depends on aspartate 364, which acts as the Proton acceptor.

This sequence belongs to the protein kinase superfamily. Ser/Thr protein kinase family.

Its subcellular location is the cytoplasm. The protein resides in the nucleus. The catalysed reaction is L-seryl-[protein] + ATP = O-phospho-L-seryl-[protein] + ADP + H(+). The enzyme catalyses L-threonyl-[protein] + ATP = O-phospho-L-threonyl-[protein] + ADP + H(+). This chain is Serine/threonine-protein kinase ppk8 (ppk8), found in Schizosaccharomyces pombe (strain 972 / ATCC 24843) (Fission yeast).